Consider the following 484-residue polypeptide: ATP synthase subunit beta (484 aa).

156–163 is a binding site for ATP; the sequence is GGAGVGKT.

This sequence belongs to the ATPase alpha/beta chains family. As to quaternary structure, F-type ATPases have 2 components, CF(1) - the catalytic core - and CF(0) - the membrane proton channel. CF(1) has five subunits: alpha(3), beta(3), gamma(1), delta(1), epsilon(1). CF(0) has three main subunits: a(1), b(2) and c(9-12). The alpha and beta chains form an alternating ring which encloses part of the gamma chain. CF(1) is attached to CF(0) by a central stalk formed by the gamma and epsilon chains, while a peripheral stalk is formed by the delta and b chains.

Its subcellular location is the cell inner membrane. It catalyses the reaction ATP + H2O + 4 H(+)(in) = ADP + phosphate + 5 H(+)(out). Produces ATP from ADP in the presence of a proton gradient across the membrane. The catalytic sites are hosted primarily by the beta subunits. In Rhizorhabdus wittichii (strain DSM 6014 / CCUG 31198 / JCM 15750 / NBRC 105917 / EY 4224 / RW1) (Sphingomonas wittichii), this protein is ATP synthase subunit beta.